The sequence spans 906 residues: MQHIFAFFCTGFLGAVVGANFPNNIQIGGLFPNQQSQEHAAFRFALSQLTEPPKLLPQIDIVNISDSFEMTYRFCSQFSKGVYAIFGFYERRTVNMLTSFCGALHVCFITPSFPVDTSNQFVLQLRPELQDALISIIDHYKWQKFVYIYDADRGLSVLQKVLDTAAEKNWQVTAVNILTTTEEGYRMLFQDLEKKKERLVVVDCESERLNAILGQIIKLEKNGIGYHYILANLGFMDIDLNKFKESGANVTGFQLVNYTDTIPAKIMQQWKNSDARDHTRVDWKRPKYTSALTYDGVKVMAEAFQSLRRQRIDISRRGNAGDCLANPAVPWGQGIDIQRALQQVRFEGLTGNVQFNEKGRRTNYTLHVIEMKHDGIRKIGYWNEDDKFVPAATDAQAGGDNSSVQNRTYIVTTILEDPYVMLKKNANQFEGNDRYEGYCVELAAEIAKHVGYSYRLEIVSDGKYGARDPDTKAWNGMVGELVYGRADVAVAPLTITLVREEVIDFSKPFMSLGISIMIKKPQKSKPGVFSFLDPLAYEIWMCIVFAYIGVSVVLFLVSRFSPYEWHSEEFEEGRDQTTSDQSNEFGIFNSLWFSLGAFMQQGCDISPRSLSGRIVGGVWWFFTLIIISSYTANLAAFLTVERMVSPIESAEDLAKQTEIAYGTLEAGSTKEFFRRSKIAVFEKMWTYMKSAEPSVFVRTTEEGMIRVRKSKGKYAYLLESTMNEYIEQRKPCDTMKVGGNLDSKGYGIATPKGSALRNPVNLAVLKLNEQGLLDKLKNKWWYDKGECGSGGGDSKDKTSALSLSNVAGVFYILIGGLGLAMLVALIEFCYKSRSESKRMKGFCLIPQQSINEAIRTSTLPRNSGAGASSAGSGENGRVVSHDFPKSMQSIPCMSHSSGMPLGATGL.

The first 18 residues, methionine 1–glycine 18, serve as a signal peptide directing secretion. Topologically, residues alanine 19–alanine 536 are extracellular. 6 N-linked (GlcNAc...) asparagine glycosylation sites follow: asparagine 63, asparagine 249, asparagine 257, asparagine 363, asparagine 401, and asparagine 406. Cysteine 75 and cysteine 323 are joined by a disulfide. Residues proline 492, threonine 494, and arginine 499 each coordinate L-glutamate. The helical transmembrane segment at tyrosine 537–valine 557 threads the bilayer. Residues serine 558–glutamate 584 lie on the Cytoplasmic side of the membrane. Residues phenylalanine 585–glutamine 600 constitute an intramembrane region (helical; Pore-forming). Residues glutamine 601–cysteine 603 lie within the membrane without spanning it. Cysteine 603 carries the S-palmitoyl cysteine lipid modification. Over aspartate 604–serine 609 the chain is Cytoplasmic. A helical transmembrane segment spans residues leucine 610 to tyrosine 630. At threonine 631–asparagine 805 the chain is on the extracellular side. Serine 645 bears the Phosphoserine mark. Residues serine 668 and threonine 669 each contribute to the L-glutamate site. A Phosphoserine modification is found at serine 710. Glutamate 719 serves as a coordination point for L-glutamate. A disulfide bridge connects residues cysteine 732 and cysteine 787. A helical membrane pass occupies residues valine 806–isoleucine 826. The Cytoplasmic portion of the chain corresponds to glutamate 827–leucine 906. Cysteine 829 is lipidated: S-palmitoyl cysteine. 2 positions are modified to phosphoserine: serine 849 and serine 863. The segment at arginine 861–serine 880 is disordered. The span at serine 863–serine 872 shows a compositional bias: low complexity. The PDZ-binding signature appears at alanine 903 to leucine 906.

The protein belongs to the glutamate-gated ion channel (TC 1.A.10.1) family. GRIA1 subfamily. As to quaternary structure, homotetramer or heterotetramer of pore-forming glutamate receptor subunits; heteromeric assembly can be the result of both receptor subtype and flip-flop forms and according the composition, one partner can be dominant with respect to the fast desensitizing current component, whereas the other can determine the steady-state component. Tetramers may be formed by the dimerization of dimers. Found in a complex with GRIA2, GRIA3, GRIA4, CNIH2, CNIH3, CACNG2, CACNG3, CACNG4, CACNG5, CACNG7 and CACNG8. Interacts with HIP1 and RASGRF2. Interacts with SYNDIG1 and GRIA2. Interacts with DLG1 (via C-terminus). Interacts with LRFN1. Interacts with PRKG2. Interacts with CNIH2 and CACNG2. Interacts with CACNG5; this interaction modulates the gating. Interacts (via C-terminus) with PDLIM4 (via LIM domain); this interaction as well as the interaction of PDLIM4 with alpha-actinin is required for their colocalization in early endosomes. Interacts with SNX27 (via PDZ domain); the interaction is required for recycling to the plasma membrane when endocytosed and prevent degradation in lysosomes. Interacts (via PDZ-binding motif) with SHANK3 (via PDZ domain). Interacts with CACNG3; associates GRIA1 with the adapter protein complex 4 (AP-4) to target GRIA1 to the somatodendritic compartment of neurons. Interacts with CACNG2; this interaction mediates traffick to the plasma membrane and modulation of desensitization. Interaction with CNIH2 and CNIH3; this interaction promotes expression at the plasma membrane and extensively modulates their gating properties by slowing deactivation and desensitization kinetics. Found in a complex with GRIA2, GRIA3, GRIA4, DLG4, CACNG8 and CNIH2. Post-translationally, phosphorylated at Ser-645. Phosphorylated at Ser-710 by PKC. Phosphorylated at Ser-849 by PKC, PKA and CAMK2. Phosphorylated at Ser-863 by PKC, PKA and PRKG2. Phosphorylation of Ser-863 is reduced by induction of long-term depression and increased by induction of long-term potentiation. In terms of processing, palmitoylated. Depalmitoylated by CPT1C and upon L-glutamate stimulation. ZDHHC3/GODZ specifically palmitoylates Cys-603, which leads to Golgi retention and decreased cell surface expression. In contrast, Cys-829 palmitoylation does not affect cell surface expression but regulates stimulation-dependent endocytosis.

It is found in the cell membrane. Its subcellular location is the endoplasmic reticulum membrane. The protein localises to the postsynaptic cell membrane. The protein resides in the postsynaptic density membrane. It localises to the cell projection. It is found in the dendrite. Its subcellular location is the dendritic spine. The protein localises to the early endosome membrane. The protein resides in the recycling endosome membrane. It localises to the presynapse. It is found in the synapse. The enzyme catalyses Ca(2+)(in) = Ca(2+)(out). It catalyses the reaction Na(+)(in) = Na(+)(out). The catalysed reaction is Mg(2+)(in) = Mg(2+)(out). It carries out the reaction Li(+)(in) = Li(+)(out). The enzyme catalyses K(+)(in) = K(+)(out). It catalyses the reaction Sr(2+)(in) = Sr(2+)(out). Functionally, ionotropic glutamate receptor that functions as a ligand-gated cation channel, gated by L-glutamate and glutamatergic agonists such as alpha-amino-3-hydroxy-5-methyl-4-isoxazolepropionic acid (AMPA), quisqualic acid, and kainic acid. L-glutamate acts as an excitatory neurotransmitter at many synapses in the central nervous system. Binding of the excitatory neurotransmitter L-glutamate induces a conformation change, leading to the opening of the cation channel, and thereby converts the chemical signal to an electrical impulse upon entry of monovalent and divalent cations such as sodium and calcium. The receptor then desensitizes rapidly and enters in a transient inactive state, characterized by the presence of bound agonist. In the presence of CACNG2 or CACNG4 or CACNG7 or CACNG8, shows resensitization which is characterized by a delayed accumulation of current flux upon continued application of L-glutamate. Calcium (Ca(2+)) permeability depends on subunits composition and, heteromeric channels containing edited GRIA2 subunit are calcium-impermeable. Also permeable to other divalents cations such as strontium(2+) and magnesium(2+) and monovalent cations such as potassium(1+) and lithium(1+). This is Glutamate receptor 1 from Macaca fascicularis (Crab-eating macaque).